We begin with the raw amino-acid sequence, 155 residues long: MAKKDKHDDALARNRRASFNYFIGETYEAGIQLTGTEIKSVRLGQITIGDAYITVRDQQAFLNNANISPYKQGNQFNVDPLRRRKLLLHKKEILALDRAVSKEGKTIVPLRVYIVKGFAKILIAIGTGKKNYDKRQTIKERDLKRELGKNLKNFH.

The protein belongs to the SmpB family.

The protein resides in the cytoplasm. Required for rescue of stalled ribosomes mediated by trans-translation. Binds to transfer-messenger RNA (tmRNA), required for stable association of tmRNA with ribosomes. tmRNA and SmpB together mimic tRNA shape, replacing the anticodon stem-loop with SmpB. tmRNA is encoded by the ssrA gene; the 2 termini fold to resemble tRNA(Ala) and it encodes a 'tag peptide', a short internal open reading frame. During trans-translation Ala-aminoacylated tmRNA acts like a tRNA, entering the A-site of stalled ribosomes, displacing the stalled mRNA. The ribosome then switches to translate the ORF on the tmRNA; the nascent peptide is terminated with the 'tag peptide' encoded by the tmRNA and targeted for degradation. The ribosome is freed to recommence translation, which seems to be the essential function of trans-translation. This chain is SsrA-binding protein, found in Oenococcus oeni (strain ATCC BAA-331 / PSU-1).